Here is a 417-residue protein sequence, read N- to C-terminus: Serine hydroxymethyltransferase (417 aa).

(6S)-5,6,7,8-tetrahydrofolate is bound by residues Leu-121 and 125 to 127 (GHL). Lys-229 is subject to N6-(pyridoxal phosphate)lysine. 355-357 (SPF) is a binding site for (6S)-5,6,7,8-tetrahydrofolate.

This sequence belongs to the SHMT family. As to quaternary structure, homodimer. It depends on pyridoxal 5'-phosphate as a cofactor.

The protein localises to the cytoplasm. The enzyme catalyses (6R)-5,10-methylene-5,6,7,8-tetrahydrofolate + glycine + H2O = (6S)-5,6,7,8-tetrahydrofolate + L-serine. Its pathway is one-carbon metabolism; tetrahydrofolate interconversion. It participates in amino-acid biosynthesis; glycine biosynthesis; glycine from L-serine: step 1/1. Functionally, catalyzes the reversible interconversion of serine and glycine with tetrahydrofolate (THF) serving as the one-carbon carrier. This reaction serves as the major source of one-carbon groups required for the biosynthesis of purines, thymidylate, methionine, and other important biomolecules. Also exhibits THF-independent aldolase activity toward beta-hydroxyamino acids, producing glycine and aldehydes, via a retro-aldol mechanism. The protein is Serine hydroxymethyltransferase of Edwardsiella ictaluri (strain 93-146).